Reading from the N-terminus, the 376-residue chain is Lipid-A-disaccharide synthase (376 aa).

Belongs to the LpxB family.

The enzyme catalyses a lipid X + a UDP-2-N,3-O-bis[(3R)-3-hydroxyacyl]-alpha-D-glucosamine = a lipid A disaccharide + UDP + H(+). It functions in the pathway bacterial outer membrane biogenesis; LPS lipid A biosynthesis. Its function is as follows. Condensation of UDP-2,3-diacylglucosamine and 2,3-diacylglucosamine-1-phosphate to form lipid A disaccharide, a precursor of lipid A, a phosphorylated glycolipid that anchors the lipopolysaccharide to the outer membrane of the cell. The sequence is that of Lipid-A-disaccharide synthase from Coxiella burnetii (strain Dugway 5J108-111).